We begin with the raw amino-acid sequence, 354 residues long: Chorismate synthase (354 aa).

Arg-48 lines the NADP(+) pocket. Residues 125–127 (RAS), Gly-277, 292–296 (KPIPS), and Arg-318 each bind FMN.

Belongs to the chorismate synthase family. In terms of assembly, homotetramer. Requires FMNH2 as cofactor.

It carries out the reaction 5-O-(1-carboxyvinyl)-3-phosphoshikimate = chorismate + phosphate. It functions in the pathway metabolic intermediate biosynthesis; chorismate biosynthesis; chorismate from D-erythrose 4-phosphate and phosphoenolpyruvate: step 7/7. Catalyzes the anti-1,4-elimination of the C-3 phosphate and the C-6 proR hydrogen from 5-enolpyruvylshikimate-3-phosphate (EPSP) to yield chorismate, which is the branch point compound that serves as the starting substrate for the three terminal pathways of aromatic amino acid biosynthesis. This reaction introduces a second double bond into the aromatic ring system. This chain is Chorismate synthase, found in Nitratidesulfovibrio vulgaris (strain DP4) (Desulfovibrio vulgaris).